A 284-amino-acid polypeptide reads, in one-letter code: 2-dehydro-3-deoxyphosphooctonate aldolase (284 aa).

Belongs to the KdsA family.

It localises to the cytoplasm. It catalyses the reaction D-arabinose 5-phosphate + phosphoenolpyruvate + H2O = 3-deoxy-alpha-D-manno-2-octulosonate-8-phosphate + phosphate. It functions in the pathway carbohydrate biosynthesis; 3-deoxy-D-manno-octulosonate biosynthesis; 3-deoxy-D-manno-octulosonate from D-ribulose 5-phosphate: step 2/3. The protein operates within bacterial outer membrane biogenesis; lipopolysaccharide biosynthesis. This is 2-dehydro-3-deoxyphosphooctonate aldolase from Pectobacterium atrosepticum (strain SCRI 1043 / ATCC BAA-672) (Erwinia carotovora subsp. atroseptica).